A 357-amino-acid chain; its full sequence is 4-hydroxy-3-methylbut-2-en-1-yl diphosphate synthase (flavodoxin) (357 aa).

Residues C264, C267, C299, and E306 each contribute to the [4Fe-4S] cluster site.

It belongs to the IspG family. [4Fe-4S] cluster serves as cofactor.

The catalysed reaction is (2E)-4-hydroxy-3-methylbut-2-enyl diphosphate + oxidized [flavodoxin] + H2O + 2 H(+) = 2-C-methyl-D-erythritol 2,4-cyclic diphosphate + reduced [flavodoxin]. The protein operates within isoprenoid biosynthesis; isopentenyl diphosphate biosynthesis via DXP pathway; isopentenyl diphosphate from 1-deoxy-D-xylulose 5-phosphate: step 5/6. Converts 2C-methyl-D-erythritol 2,4-cyclodiphosphate (ME-2,4cPP) into 1-hydroxy-2-methyl-2-(E)-butenyl 4-diphosphate. This is 4-hydroxy-3-methylbut-2-en-1-yl diphosphate synthase (flavodoxin) from Campylobacter jejuni subsp. jejuni serotype O:6 (strain 81116 / NCTC 11828).